We begin with the raw amino-acid sequence, 328 residues long: Diaminopimelate epimerase (328 aa).

The substrate site is built by Asn14 and Asn73. Residue Cys82 is the Proton donor of the active site. Substrate is bound by residues 83 to 84 (GN), Asn170, Asn206, and 224 to 225 (ER). The active-site Proton acceptor is Cys233. 234 to 235 (GT) is a binding site for substrate.

It belongs to the diaminopimelate epimerase family. In terms of assembly, homodimer.

The protein localises to the cytoplasm. It catalyses the reaction (2S,6S)-2,6-diaminopimelate = meso-2,6-diaminopimelate. Its pathway is amino-acid biosynthesis; L-lysine biosynthesis via DAP pathway; DL-2,6-diaminopimelate from LL-2,6-diaminopimelate: step 1/1. Catalyzes the stereoinversion of LL-2,6-diaminopimelate (L,L-DAP) to meso-diaminopimelate (meso-DAP), a precursor of L-lysine and an essential component of the bacterial peptidoglycan. The chain is Diaminopimelate epimerase from Listeria welshimeri serovar 6b (strain ATCC 35897 / DSM 20650 / CCUG 15529 / CIP 8149 / NCTC 11857 / SLCC 5334 / V8).